An 81-amino-acid polypeptide reads, in one-letter code: Tissue- and phase-specific nuclear protein (81 aa).

As to expression, expressed in oviduct, where expression levels are higher in uterine sections than in tuba sections. No expression detected in small intestine and liver (at protein level).

The protein localises to the nucleus. The chain is Tissue- and phase-specific nuclear protein from Podarcis siculus (Italian wall lizard).